We begin with the raw amino-acid sequence, 415 residues long: Phosphoribosylamine--glycine ligase (415 aa).

The region spanning Lys108 to Glu311 is the ATP-grasp domain. Ile134–Ser191 contacts ATP. 2 residues coordinate Mg(2+): Glu281 and Asn283.

The protein belongs to the GARS family. It depends on Mg(2+) as a cofactor. The cofactor is Mn(2+).

The catalysed reaction is 5-phospho-beta-D-ribosylamine + glycine + ATP = N(1)-(5-phospho-beta-D-ribosyl)glycinamide + ADP + phosphate + H(+). It participates in purine metabolism; IMP biosynthesis via de novo pathway; N(1)-(5-phospho-D-ribosyl)glycinamide from 5-phospho-alpha-D-ribose 1-diphosphate: step 2/2. The protein is Phosphoribosylamine--glycine ligase of Staphylococcus aureus (strain COL).